Reading from the N-terminus, the 381-residue chain is Succinate--CoA ligase [ADP-forming] subunit beta (381 aa).

The 228-residue stretch at 9–236 (KELLRVAGVP…ESSEAPSEVD (228 aa)) folds into the ATP-grasp domain. Residues Lys45, 52 to 54 (GRG), Ala94, and Glu99 contribute to the ATP site. Asn191 and Asp205 together coordinate Mg(2+). Residues Asn256 and 313–315 (GIT) each bind substrate.

The protein belongs to the succinate/malate CoA ligase beta subunit family. In terms of assembly, heterotetramer of two alpha and two beta subunits. Mg(2+) is required as a cofactor.

The catalysed reaction is succinate + ATP + CoA = succinyl-CoA + ADP + phosphate. It carries out the reaction GTP + succinate + CoA = succinyl-CoA + GDP + phosphate. It participates in carbohydrate metabolism; tricarboxylic acid cycle; succinate from succinyl-CoA (ligase route): step 1/1. Functionally, succinyl-CoA synthetase functions in the citric acid cycle (TCA), coupling the hydrolysis of succinyl-CoA to the synthesis of either ATP or GTP and thus represents the only step of substrate-level phosphorylation in the TCA. The beta subunit provides nucleotide specificity of the enzyme and binds the substrate succinate, while the binding sites for coenzyme A and phosphate are found in the alpha subunit. In Gemmatimonas aurantiaca (strain DSM 14586 / JCM 11422 / NBRC 100505 / T-27), this protein is Succinate--CoA ligase [ADP-forming] subunit beta.